The chain runs to 225 residues: Venom allergen 5 (225 aa).

Positions 1–23 (MKISGFVYLILITTIINLSFSEA) are cleaved as a signal peptide. Intrachain disulfides connect Cys-27–Cys-39, Cys-31–Cys-124, Cys-49–Cys-117, and Cys-191–Cys-208. One can recognise an SCP domain in the interval 69–210 (KQHNEFRQKV…WHRHYLVCNY (142 aa)).

The protein belongs to the CRISP family. Venom allergen 5-like subfamily. As to expression, expressed by the venom gland.

It is found in the secreted. The protein is Venom allergen 5 of Vespa magnifica (Hornet).